Consider the following 156-residue polypeptide: Calglandulin (156 aa).

EF-hand domains lie at 8–43 (EQIT…IGIN), 44–79 (PTKR…YHEK), 82–117 (NQDE…AGEP), and 118–153 (LNEH…ESFK). Ca(2+) is bound by residues D131, D133, D135, T137, and E142.

It belongs to the calmodulin family. Calglandulin subfamily. As to expression, expressed by the venom gland.

It is found in the cytoplasm. Its function is as follows. May be involved in the cellular control mechanism of the secretion of toxins from the gland into the venom. In Tropidechis carinatus (Australian rough-scaled snake), this protein is Calglandulin.